The chain runs to 520 residues: DnaJ homolog l(2)tid, mitochondrial (520 aa).

The transit peptide at 1 to 62 directs the protein to the mitochondrion; that stretch reads MMISCKKLFV…RRLHTTRDLL (62 aa). The residue at position 30 (R30) is an Omega-N-methylarginine. Residues 65–130 enclose the J domain; it reads DYYATLGVAK…QKRREYDTYG (66 aa). K106 is modified (N6-acetyllysine). The segment at 214–292 adopts a CR-type zinc-finger fold; the sequence is GVNKDVNVNV…CEGKGRTVQR (79 aa). The Zn(2+) site is built by C227, C230, C244, C247, C266, C269, C280, and C283. One copy of the CXXCXGXG motif; approximate repeat lies at 227 to 234; sequence CPKCAGTK. One copy of the CXXCXGXG motif repeat lies at 244 to 251; it reads CQYCNGTG. The CXXCXGXG motif; approximate repeat unit spans residues 266-273; it reads CRYCQGTR. A CXXCXGXG motif repeat occupies 280 to 287; the sequence is CSECEGKG. The disordered stretch occupies residues 430–520; it reads QIHGIANRKD…FISKIKSMFN (91 aa). Low complexity predominate over residues 446–476; that stretch reads AGASEEPGAGAAAKASAAAAGSGASKPGPGA. Residues 479 to 495 are compositionally biased toward basic and acidic residues; the sequence is SEGKDQWTDNKKTKAKE. Positions 496-511 are enriched in gly residues; the sequence is GGGSGSGQGDGGGGGF.

Interacts with ptc (via C-terminal cytoplasmic region); the interaction is probably direct. Interacts with hh/hedgehog; the interaction is probably mediated by the hedgehog receptor ptc. Post-translationally, appears to produce proteins of differing size. Predicted to have a molecular mass of 56 kDa (TID56) however proteins of 50 kDa, 47 kDa and 40 kDa have been identified and named TID50, TID47 and TID40. TID50 and TID40 localize to the mitochondria while TID47 localizes to the cytoplasm. TID50 is probably TID56 that has undergone mitochondrial transit peptide processing. TID40 and TID47 may be alternately processed proteins or may be isoforms resulting from alternative splicing. As to expression, ubiquitously expressed throughout embryonic development. In larvae, expression is seen in sensory organs, gopplet cells, gonads, imaginal disks, proventriculus, fat body, hematopoietic organ, midgut, Malpighian tubules and ring gland.

It localises to the cytoplasm. It is found in the cytosol. The protein resides in the mitochondrion. Its subcellular location is the mitochondrion outer membrane. In terms of biological role, involved in hh/hedgehog signaling. May act as a tumor suppressor in larval imaginal disks. In Drosophila melanogaster (Fruit fly), this protein is DnaJ homolog l(2)tid, mitochondrial.